The following is a 543-amino-acid chain: Excitatory amino acid transporter 1 (543 aa).

The Cytoplasmic portion of the chain corresponds to 1 to 47; that stretch reads MTKSNGEDPRAGSRMERFQQGVRQRTLLAKKKVQNITKDDVKGFLKR. The chain crosses the membrane as a helical span at residues 48-68; the sequence is NGFVLFTVIAVVVGSILGFSV. The Extracellular portion of the chain corresponds to 69–86; sequence RSYHMTFRELKYFSFPGE. The helical transmembrane segment at 87–108 threads the bilayer; that stretch reads LLMRMLQMLVLPLIVSSLVTGM. Residues 109–122 lie on the Cytoplasmic side of the membrane; that stretch reads AALDSKASGKMGLR. A helical transmembrane segment spans residues 123 to 145; that stretch reads AVVYYMTTTVIAVFIGIVIVIIV. The Extracellular segment spans residues 146–237; that stretch reads HPGKGTKEHM…MREEMIPVPG (92 aa). 2 N-linked (GlcNAc...) asparagine glycosylation sites follow: asparagine 206 and asparagine 217. The chain crosses the membrane as a helical span at residues 238–261; it reads AVNGVNALGLVVFSMCFGLVIGNM. The Cytoplasmic portion of the chain corresponds to 262–270; it reads KEQGKALKD. A helical transmembrane segment spans residues 271–298; that stretch reads FFDSLNEAIMRLVAVIMWYAPIGILFLI. Residues 299-319 lie on the Extracellular side of the membrane; the sequence is AGKIAEMEDMGVVGGQLGMYT. The chain crosses the membrane as a helical span at residues 320-341; sequence VTVIIGLLIHAVIVLPLLYFAV. Residues 342-346 are Cytoplasmic-facing; that stretch reads TRKNP. Residues 347–377 constitute an intramembrane region (discontinuously helical); the sequence is WVFIGGILQALITALGTSSSSATLPITFKCL. 364 to 366 is an L-aspartate binding site; sequence SSS. Over 378–386 the chain is Cytoplasmic; it reads EENNKVDKR. The helical transmembrane segment at 387–413 threads the bilayer; the sequence is VTRFVLPVGATINMDGTALYEALAAIF. Na(+)-binding residues include glycine 395, threonine 397, and asparagine 399. Threonine 403 provides a ligand contact to L-aspartate. Residues 414–426 lie on the Extracellular side of the membrane; that stretch reads IAQVNNYDLNFGQ. The discontinuously helical intramembrane region spans 427-460; sequence ILTISITATAASIGAAGIPQAGLVTMVIVLTSVG. Residue 444 to 448 coordinates L-aspartate; the sequence is IPQAG. Residues 461-473 lie on the Extracellular side of the membrane; sequence LPTDDITLIIAVD. Residues 474–495 traverse the membrane as a helical segment; it reads WFLDRLRTTTNVLGDSLGAGIV. Positions 477 and 484 each coordinate L-aspartate. Na(+)-binding residues include asparagine 484 and aspartate 488. The Cytoplasmic segment spans residues 496–543; the sequence is EHLSRHELQSGDAEMGNSVIEENEMKKPYQLVSQENELEKPIDSETKM. A disordered region spans residues 521 to 543; the sequence is KKPYQLVSQENELEKPIDSETKM. Residues 532–543 show a composition bias toward basic and acidic residues; it reads ELEKPIDSETKM.

It belongs to the dicarboxylate/amino acid:cation symporter (DAACS) (TC 2.A.23) family. As to quaternary structure, homotrimer. Detected in retina (at protein level).

The protein resides in the cell membrane. It carries out the reaction K(+)(in) + L-glutamate(out) + 3 Na(+)(out) + H(+)(out) = K(+)(out) + L-glutamate(in) + 3 Na(+)(in) + H(+)(in). The enzyme catalyses K(+)(in) + L-aspartate(out) + 3 Na(+)(out) + H(+)(out) = K(+)(out) + L-aspartate(in) + 3 Na(+)(in) + H(+)(in). It catalyses the reaction D-aspartate(out) + K(+)(in) + 3 Na(+)(out) + H(+)(out) = D-aspartate(in) + K(+)(out) + 3 Na(+)(in) + H(+)(in). Functionally, sodium-dependent, high-affinity amino acid transporter that mediates the uptake of L-glutamate and also L-aspartate and D-aspartate. Functions as a symporter that transports one amino acid molecule together with two or three Na(+) ions and one proton, in parallel with the counter-transport of one K(+) ion. Plays a redundant role in the rapid removal of released glutamate from the synaptic cleft, which is essential for terminating the postsynaptic action of glutamate. This is Excitatory amino acid transporter 1 (SLC1A3) from Ambystoma tigrinum (Eastern tiger salamander).